We begin with the raw amino-acid sequence, 304 residues long: Secreted mono- and diacylglycerol lipase LIP1 (304 aa).

An N-terminal signal peptide occupies residues 1 to 19 (MLFSRFVLLAFGSVAAVSA). T32 carries O-linked (Man...) threonine glycosylation. Residues C57 and C297 are joined by a disulfide bond. The Nucleophile role is filled by S171. D228 is an active-site residue. The N-linked (GlcNAc...) asparagine glycan is linked to N253. H281 is an active-site residue.

The protein belongs to the AB hydrolase superfamily. Lipase family. Class 3 subfamily.

The protein resides in the secreted. It is found in the cell wall. The enzyme catalyses a monoacylglycerol + H2O = glycerol + a fatty acid + H(+). It carries out the reaction a diacylglycerol + H2O = a monoacylglycerol + a fatty acid + H(+). Its activity is regulated as follows. RHC 80267, a well-known inhibitor of diacylglycerol lipases from mammals, also acts as an inhibitor for LIP1/SMG1. In terms of biological role, secreted lipase involved in Dandruff and seborrheic dermatitis (D/SD) probably via lipase-mediated breakdown of sebaceous lipids and release of irritating free fatty acids. Shows activity against monoglyceride and diglyceride substrates, but not triglyceride substrates and does not exhibit regio-selective production of diacylglycerols. Able to hydrolyze diacylglycerols such as distearin, dilinolein, dipalmitoylglycerol and dipalmitolein. Cleaves oleic acid from 1,2 isomers of diolein on both the 1 and the 2 position of the glycerol backbone, resulting mainly in free fatty acids but no monoolein is detected. Shows activity on monoolein and liberates mostly free fatty acids, but can also perform the reverse reaction and produce diolein. The protein is Secreted mono- and diacylglycerol lipase LIP1 of Malassezia globosa (strain ATCC MYA-4612 / CBS 7966) (Dandruff-associated fungus).